The following is a 374-amino-acid chain: tRNA-specific 2-thiouridylase MnmA (374 aa).

Residues 8–15 (GLSGGVDS) and Met-34 each bind ATP. Residues 104-106 (NPD) are interaction with target base in tRNA. Catalysis depends on Cys-109, which acts as the Nucleophile. Cys-109 and Cys-208 form a disulfide bridge. An ATP-binding site is contributed by Gly-134. Residues 158–160 (KDQ) form an interaction with tRNA region. The active-site Cysteine persulfide intermediate is the Cys-208. The segment at 321 to 322 (RY) is interaction with tRNA.

It belongs to the MnmA/TRMU family.

It is found in the cytoplasm. The enzyme catalyses S-sulfanyl-L-cysteinyl-[protein] + uridine(34) in tRNA + AH2 + ATP = 2-thiouridine(34) in tRNA + L-cysteinyl-[protein] + A + AMP + diphosphate + H(+). Functionally, catalyzes the 2-thiolation of uridine at the wobble position (U34) of tRNA, leading to the formation of s(2)U34. This is tRNA-specific 2-thiouridylase MnmA from Mesoplasma florum (strain ATCC 33453 / NBRC 100688 / NCTC 11704 / L1) (Acholeplasma florum).